The sequence spans 371 residues: Carbamoyl phosphate synthase small chain (371 aa).

Positions 1-186 (MDYYNNDTPG…IHQGKTGDVV (186 aa)) are CPSase. Residues Ser52, Gly233, and Gly235 each coordinate L-glutamine. The 187-residue stretch at 185–371 (VVVVVDCGIK…KFKKMVVGDA (187 aa)) folds into the Glutamine amidotransferase type-1 domain. The Nucleophile role is filled by Cys261. Positions 262, 265, 303, 305, and 306 each coordinate L-glutamine. Residues His346 and Glu348 contribute to the active site.

The protein belongs to the CarA family. In terms of assembly, composed of two chains; the small (or glutamine) chain promotes the hydrolysis of glutamine to ammonia, which is used by the large (or ammonia) chain to synthesize carbamoyl phosphate. Tetramer of heterodimers (alpha,beta)4.

It carries out the reaction hydrogencarbonate + L-glutamine + 2 ATP + H2O = carbamoyl phosphate + L-glutamate + 2 ADP + phosphate + 2 H(+). It catalyses the reaction L-glutamine + H2O = L-glutamate + NH4(+). The protein operates within amino-acid biosynthesis; L-arginine biosynthesis; carbamoyl phosphate from bicarbonate: step 1/1. It functions in the pathway pyrimidine metabolism; UMP biosynthesis via de novo pathway; (S)-dihydroorotate from bicarbonate: step 1/3. In terms of biological role, small subunit of the glutamine-dependent carbamoyl phosphate synthetase (CPSase). CPSase catalyzes the formation of carbamoyl phosphate from the ammonia moiety of glutamine, carbonate, and phosphate donated by ATP, constituting the first step of 2 biosynthetic pathways, one leading to arginine and/or urea and the other to pyrimidine nucleotides. The small subunit (glutamine amidotransferase) binds and cleaves glutamine to supply the large subunit with the substrate ammonia. This chain is Carbamoyl phosphate synthase small chain, found in Sulfolobus acidocaldarius (strain ATCC 33909 / DSM 639 / JCM 8929 / NBRC 15157 / NCIMB 11770).